The primary structure comprises 465 residues: D-ornithine/D-lysine decarboxylase (465 aa).

The residue at position 80 (lysine 80) is an N6-(pyridoxal phosphate)lysine. Residues glycine 259 and 307–310 (EPGR) each bind pyridoxal 5'-phosphate. Cysteine 387 (proton donor) is an active-site residue. A pyridoxal 5'-phosphate-binding site is contributed by tyrosine 422.

It belongs to the Orn/Lys/Arg decarboxylase class-II family. As to quaternary structure, homodimer. Pyridoxal 5'-phosphate is required as a cofactor.

It carries out the reaction D-ornithine + H(+) = putrescine + CO2. The enzyme catalyses D-lysine + H(+) = cadaverine + CO2. Functionally, catalyzes the decarboxylation of D-ornithine and D-lysine. Ornithine is likely the physiological substrate. Has no detectable diaminopimelate decarboxylase activity in vitro. The sequence is that of D-ornithine/D-lysine decarboxylase from Salmonella typhimurium (strain LT2 / SGSC1412 / ATCC 700720).